We begin with the raw amino-acid sequence, 310 residues long: Fructose-bisphosphate aldolase/6-deoxy-5-ketofructose 1-phosphate synthase (310 aa).

Substrate-binding positions include 48–49, His-53, Asp-57, and Trp-180; that span reads DQ. The active-site Proton donor is Tyr-182. Substrate contacts are provided by residues Arg-184, 213 to 215, 241 to 243, and 270 to 271; these read KVN, AGG, and GR. The active-site Schiff-base intermediate with dihydroxyacetone-P is Lys-213. Lys-213 (schiff-base intermediate with substrate) is an active-site residue.

Belongs to the DeoC/FbaB aldolase family.

The enzyme catalyses beta-D-fructose 1,6-bisphosphate = D-glyceraldehyde 3-phosphate + dihydroxyacetone phosphate. It catalyses the reaction beta-D-fructose 1,6-bisphosphate + methylglyoxal = 1-deoxy-D-threo-hexo-2,5-diulose 6-phosphate + D-glyceraldehyde 3-phosphate. The catalysed reaction is beta-D-fructose 1-phosphate + methylglyoxal = 1-deoxy-D-threo-hexo-2,5-diulose 6-phosphate + D-glyceraldehyde. Its pathway is aromatic compound metabolism. Functionally, catalyzes the transaldolization of either fructose-1-P or fructose-1,6-bisphosphate with methylglyoxal to produce 6-deoxy-5-ketofructose-1-phosphate (DKFP). Also catalyzes the reversible aldol condensation of dihydroxyacetone phosphate (DHAP or glycerone-phosphate) with glyceraldehyde 3-phosphate (G3P or GAP) to produce fructose 1,6-bisphosphate (FBP). The sequence is that of Fructose-bisphosphate aldolase/6-deoxy-5-ketofructose 1-phosphate synthase from Methanocaldococcus jannaschii (strain ATCC 43067 / DSM 2661 / JAL-1 / JCM 10045 / NBRC 100440) (Methanococcus jannaschii).